A 629-amino-acid chain; its full sequence is Ribosomal protein S6 kinase 2 beta (629 aa).

Positions 62-321 (FVLLKVLGQG…AEELKRHPFF (260 aa)) constitute a Protein kinase 1 domain. ATP-binding positions include 68–76 (LGQGSFGKV) and Lys94. The Proton acceptor role is filled by Asp187. Ser221 is subject to Phosphoserine. The region spanning 322–391 (STIDWNKLYR…VAPVLVEEDA (70 aa)) is the AGC-kinase C-terminal domain. Thr359 bears the Phosphothreonine mark. The residue at position 363 (Ser363) is a Phosphoserine. Ser380 is subject to Phosphoserine; by autocatalysis. In terms of domain architecture, Protein kinase 2 spans 416–629 (YTVRETIGVG…PEEILARIGS (214 aa)). Residues 422–430 (IGVGSYSVC) and Lys445 contribute to the ATP site. Catalysis depends on Asp533, which acts as the Proton acceptor. Thr571 is modified (phosphothreonine).

This sequence belongs to the protein kinase superfamily. AGC Ser/Thr protein kinase family. S6 kinase subfamily. It depends on Mg(2+) as a cofactor. Autophosphorylated on Ser-380, as part of the activation process.

The catalysed reaction is L-seryl-[protein] + ATP = O-phospho-L-seryl-[protein] + ADP + H(+). It catalyses the reaction L-threonyl-[protein] + ATP = O-phospho-L-threonyl-[protein] + ADP + H(+). With respect to regulation, activated by multiple phosphorylations on threonine and serine residues. In terms of biological role, serine/threonine kinase that may play a role in mediating the growth-factor and stress induced activation of transcription. The sequence is that of Ribosomal protein S6 kinase 2 beta from Xenopus laevis (African clawed frog).